A 417-amino-acid polypeptide reads, in one-letter code: S-adenosylmethionine synthase (417 aa).

His16 is an ATP binding site. Residue Asp18 coordinates Mg(2+). Position 44 (Glu44) interacts with K(+). L-methionine is bound by residues Glu57 and Gln100. The interval 100-110 is flexible loop; sequence QSPDIAQGVTS. ATP contacts are provided by residues 175–177, 251–252, Asp260, 266–267, Ala283, and Lys287; these read DGK, KF, and RK. Asp260 lines the L-methionine pocket. Position 291 (Lys291) interacts with L-methionine.

It belongs to the AdoMet synthase family. As to quaternary structure, homotetramer; dimer of dimers. The cofactor is Mg(2+). K(+) is required as a cofactor.

Its subcellular location is the cytoplasm. The catalysed reaction is L-methionine + ATP + H2O = S-adenosyl-L-methionine + phosphate + diphosphate. It participates in amino-acid biosynthesis; S-adenosyl-L-methionine biosynthesis; S-adenosyl-L-methionine from L-methionine: step 1/1. Its function is as follows. Catalyzes the formation of S-adenosylmethionine (AdoMet) from methionine and ATP. The overall synthetic reaction is composed of two sequential steps, AdoMet formation and the subsequent tripolyphosphate hydrolysis which occurs prior to release of AdoMet from the enzyme. The sequence is that of S-adenosylmethionine synthase from Picosynechococcus sp. (strain ATCC 27264 / PCC 7002 / PR-6) (Agmenellum quadruplicatum).